Consider the following 104-residue polypeptide: Hydrogen cyanide synthase subunit HcnA (104 aa).

The 2Fe-2S ferredoxin-type domain occupies 16–97 (ADMTIHLNGQ…GMRVETESNR (82 aa)). Positions 60, 65, 68, and 81 each coordinate [2Fe-2S] cluster.

As to quaternary structure, heterotrimer of HcnA, HcnB and HcnC.

The protein localises to the cell membrane. It catalyses the reaction glycine + 2 A = hydrogen cyanide + 2 AH2 + CO2. With respect to regulation, oxygen is necessary for cyanogenesis. Activated by succinate, glycine methyl ester, glucose and D,L-methionine in addition to glycine. Phenazine methosulfate, methylene blue, 2,6-dichlorophenolindophenol (DCIP) and ferricyanide can replace oxygen for the reaction. Inhibited by pyrrolnitrin and acriflavine at 1 mM concentration. A three-component membrane-bound flavoenzyme that catalyzes the formation of hydrogen cyanide, a secondary metabolite, by transfer of electrons to a cyanide-resistant branch of the aerobic respiratory chain. The sequence is that of Hydrogen cyanide synthase subunit HcnA from Pseudomonas aeruginosa (strain ATCC 15692 / DSM 22644 / CIP 104116 / JCM 14847 / LMG 12228 / 1C / PRS 101 / PAO1).